The sequence spans 103 residues: OMEGA-ectatommitoxin(02)-Rm1d (103 aa).

An N-terminal signal peptide occupies residues 1–30 (MKDSYISIVIAYLMVTFILVSSMPIEGEKR). 3 disulfides stabilise this stretch: Cys39/Cys54, Cys49/Cys70, and Cys72/Cys81. The region spanning 43–82 (LNDENYCFNGKCVHLVAQDEPGKPYYSCICDEFYIGERCG) is the EGF-like domain.

The protein belongs to the EGF domain peptide family. Expressed by the venom gland.

The protein resides in the secreted. Ant peptide with probable defensive activity which acts as a potent agonist of the mammalian epidermal growth factor receptor (EGFR). Mimics, both structurally and functionally, vertebrate epidermal growth factor (EGF) peptide hormones. In vivo, intraplantar injection in mice causes long-lasting (several days) hypersensitivity of the injected paw to both mechanical and thermal stimuli. Its long-lasting effect is unusual for venom toxins whose effects are usually immediate. One possible explanation is that it would reduce the duration of a nest attack, discourage future attacks, or enhance the actions of subsequent exposure to other pain-inducing venom peptides. The sequence is that of OMEGA-ectatommitoxin(02)-Rm1d from Rhytidoponera metallica (Australian green-headed ant).